Here is a 324-residue protein sequence, read N- to C-terminus: Granaticin polyketide synthase bifunctional cyclase/dehydratase (324 aa).

Positions 1–21 (MVQPAATPVSLPSPTVHRSEH) are disordered.

The protein operates within antibiotic biosynthesis; granaticin biosynthesis. In terms of biological role, is needed for correct cyclization of the oligoketide leading to isochromanequinone formation. This Streptomyces violaceoruber protein is Granaticin polyketide synthase bifunctional cyclase/dehydratase (gra-orf4).